Consider the following 233-residue polypeptide: Purine nucleoside phosphorylase DeoD-type (233 aa).

H4 contacts a purine D-ribonucleoside. Phosphate-binding positions include G20, R24, R43, and 87–90; that span reads RVGT. A purine D-ribonucleoside contacts are provided by residues E162, 179-181, and 203-204; these read EME and SD. The Proton donor role is filled by D204.

It belongs to the PNP/UDP phosphorylase family. As to quaternary structure, homohexamer; trimer of homodimers.

It catalyses the reaction a purine D-ribonucleoside + phosphate = a purine nucleobase + alpha-D-ribose 1-phosphate. The catalysed reaction is a purine 2'-deoxy-D-ribonucleoside + phosphate = a purine nucleobase + 2-deoxy-alpha-D-ribose 1-phosphate. Functionally, catalyzes the reversible phosphorolytic breakdown of the N-glycosidic bond in the beta-(deoxy)ribonucleoside molecules, with the formation of the corresponding free purine bases and pentose-1-phosphate. This Alkaliphilus metalliredigens (strain QYMF) protein is Purine nucleoside phosphorylase DeoD-type.